Here is a 671-residue protein sequence, read N- to C-terminus: MESIEQQLTELRTTLRHHEYLYHVMDAPEIPDAEYDRLMRELRELETKHPELITPDSPTQRVGAAPLAAFSQIRHEVPMLSLDNVFDEESFLAFNKRVQDRLKSNEKVTWCCELKLDGLAVSILYENGVLVSAATRGDGTTGEDITSNVRTIRAIPLKLHGENIPARLEVRGEVFLPQAGFEKINEDARRTGGKVFANPRNAAAGSLRQLDPRITAKRPLTFFCYGVGVLEGGELPDTHLGRLMQFKAWGLPVSDRVTLCESAEEVLAFYHEVEKDRPTLGFDIDGVVIKVNSLAQQEQLGFVARAPRWAVAFKFPAQEQMTFVRDVEFQVGRTGAITPVARLEPVHVAGVLVSNATLHNADEIERLGLRIGDKVVIRRAGDVIPQVVNVVLSERPEDTREVVFPTHCPVCGSDVERVEGEAVARCTGGLICGAQRKESLKHFVSRRAMDVDGMGDKIIDQLVEKEYVHTPADLFKLTAGKLTGLERMGLKSAQNVVNALEKAKETTFARFLYALGIREVGEATAAGLAAYFGTLEALEAASIEELQKVPDVGIVVASHVHNFFAEESNRNVISELLAEGVHWPEPIVINAEEIDSPFAGKTVVLTGSLSQMSRDDAKARLVELGAKVAGSVSKKTDLVIAGEAAGSKLAKAQELGIEVIDETEMLRLLGS.

Residues 32–36 (DAEYD), 81–82 (SL), and E113 each bind NAD(+). K115 serves as the catalytic N6-AMP-lysine intermediate. NAD(+) is bound by residues R136, E173, K290, and K314. 4 residues coordinate Zn(2+): C408, C411, C426, and C432. Positions 593–671 (EIDSPFAGKT…ETEMLRLLGS (79 aa)) constitute a BRCT domain.

The protein belongs to the NAD-dependent DNA ligase family. LigA subfamily. Requires Mg(2+) as cofactor. Mn(2+) is required as a cofactor.

The enzyme catalyses NAD(+) + (deoxyribonucleotide)n-3'-hydroxyl + 5'-phospho-(deoxyribonucleotide)m = (deoxyribonucleotide)n+m + AMP + beta-nicotinamide D-nucleotide.. DNA ligase that catalyzes the formation of phosphodiester linkages between 5'-phosphoryl and 3'-hydroxyl groups in double-stranded DNA using NAD as a coenzyme and as the energy source for the reaction. It is essential for DNA replication and repair of damaged DNA. This is DNA ligase from Escherichia coli O81 (strain ED1a).